The sequence spans 168 residues: MIIFFSIVTFLRNYLMQTLDKLDRHILNVLQQDAMIPLKELSEKVNSSVATCQRRVQSLTDSGIITKRVAVVSPKAVGRTISVFVMVEMDNQHSYYQEQFERKMRQEDEVVSCYEISGDYDFMLLLHAKDMESYHAFTRRVLTGEFHVRTYKSLFVMNFTKADSGIIL.

One can recognise an HTH asnC-type domain in the interval 19-80; it reads LDKLDRHILN…VVSPKAVGRT (62 aa). Positions 38–57 form a DNA-binding region, H-T-H motif; it reads LKELSEKVNSSVATCQRRVQ.

This is an uncharacterized protein from Haemophilus influenzae (strain ATCC 51907 / DSM 11121 / KW20 / Rd).